Consider the following 529-residue polypeptide: Peptide chain release factor 3 (529 aa).

The 270-residue stretch at 11 to 280 (SKRRTFAIIS…GLTEWAPAPK (270 aa)) folds into the tr-type G domain. Residues 20 to 27 (SHPDAGKT), 88 to 92 (DTPGH), and 142 to 145 (NKLD) contribute to the GTP site.

It belongs to the TRAFAC class translation factor GTPase superfamily. Classic translation factor GTPase family. PrfC subfamily.

It is found in the cytoplasm. Increases the formation of ribosomal termination complexes and stimulates activities of RF-1 and RF-2. It binds guanine nucleotides and has strong preference for UGA stop codons. It may interact directly with the ribosome. The stimulation of RF-1 and RF-2 is significantly reduced by GTP and GDP, but not by GMP. The protein is Peptide chain release factor 3 of Vibrio campbellii (strain ATCC BAA-1116).